The following is a 432-amino-acid chain: Adenylosuccinate synthetase (432 aa).

GTP is bound by residues glycine 13–lysine 19 and glycine 41–threonine 43. Residue aspartate 14 is the Proton acceptor of the active site. Mg(2+)-binding residues include aspartate 14 and glycine 41. IMP contacts are provided by residues aspartate 14–lysine 17, asparagine 39–histidine 42, threonine 130, arginine 144, glutamine 225, threonine 240, and arginine 304. Residue histidine 42 is the Proton donor of the active site. Alanine 300–arginine 306 provides a ligand contact to substrate. GTP is bound by residues arginine 306, lysine 332 to aspartate 334, and serine 415 to glycine 417.

Belongs to the adenylosuccinate synthetase family. Homodimer. The cofactor is Mg(2+).

Its subcellular location is the cytoplasm. It catalyses the reaction IMP + L-aspartate + GTP = N(6)-(1,2-dicarboxyethyl)-AMP + GDP + phosphate + 2 H(+). It functions in the pathway purine metabolism; AMP biosynthesis via de novo pathway; AMP from IMP: step 1/2. Its function is as follows. Plays an important role in the de novo pathway of purine nucleotide biosynthesis. Catalyzes the first committed step in the biosynthesis of AMP from IMP. The chain is Adenylosuccinate synthetase from Shigella flexneri serotype 5b (strain 8401).